We begin with the raw amino-acid sequence, 399 residues long: Bombesin receptor subtype-3 (399 aa).

The Extracellular segment spans residues Met-1–Ser-41. 2 N-linked (GlcNAc...) asparagine glycosylation sites follow: Asn-10 and Asn-18. A helical transmembrane segment spans residues Pro-42–Leu-63. The Cytoplasmic segment spans residues Gly-64–Pro-82. Residues Asn-83–Val-103 form a helical membrane-spanning segment. At Asp-104–Lys-121 the chain is on the extracellular side. A disulfide bridge connects residues Cys-120 and Cys-203. The helical transmembrane segment at Val-122 to Ala-143 threads the bilayer. The Cytoplasmic portion of the chain corresponds to Asp-144 to Lys-163. The chain crosses the membrane as a helical span at residues Thr-164–Ile-184. Residues Phe-185–Leu-220 lie on the Extracellular side of the membrane. Residues Cys-221 to Ala-241 traverse the membrane as a helical segment. Residues Arg-242 to Thr-272 lie on the Cytoplasmic side of the membrane. The chain crosses the membrane as a helical span at residues Val-273–Tyr-293. Residues His-294 to Ile-313 are Extracellular-facing. A helical membrane pass occupies residues Phe-314–Leu-333. Residues Ser-334–Phe-399 are Cytoplasmic-facing. Cys-347 carries S-palmitoyl cysteine lipidation.

It belongs to the G-protein coupled receptor 1 family. In terms of assembly, interacts with C6orf89. In terms of tissue distribution, in germ cells in testis. Lung carcinoma cells.

The protein localises to the cell membrane. Functionally, role in sperm cell division, maturation, or function. This receptor mediates its action by association with G proteins that activate a phosphatidylinositol-calcium second messenger system. This is Bombesin receptor subtype-3 (BRS3) from Homo sapiens (Human).